A 687-amino-acid polypeptide reads, in one-letter code: Chloride channel protein ClC-Ka (687 aa).

A run of 5 helical transmembrane segments spans residues 52 to 72 (FLVA…FAIG), 94 to 114 (LSWT…SQSI), 161 to 181 (IFLG…AYLG), 204 to 224 (AAAV…LFSI), and 236 to 256 (YWRG…LGVF). Ca(2+) is bound by residues Glu259, Glu261, Asp278, and Glu281. 6 helical membrane passes run 282-302 (IFFF…YLFC), 325-345 (PSYA…PGVG), 396-416 (FTIF…LILA), 417-437 (TTIP…AAIG), 458-478 (VNPI…SGAV), and 486-506 (LLAF…MAVL). Topologically, residues 507-687 (AANAISQNCQ…STLINPPAPK (181 aa)) are cytoplasmic. CBS domains are found at residues 551–609 (MNCN…QPAS) and 626–687 (CPTQ…PAPK).

It belongs to the chloride channel (TC 2.A.49) family. CLCNKA subfamily. In terms of assembly, homodimer. Interacts with BSND. As to expression, expressed predominantly in the kidney. Expressed strongly in the cortical thick ascending limb and the distal convoluted tubule, with minor expression in the S3 segment of the proximal tubule and the cortical collecting tubule.

It localises to the basolateral cell membrane. It carries out the reaction chloride(in) = chloride(out). The enzyme catalyses bromide(in) = bromide(out). The catalysed reaction is nitrate(in) = nitrate(out). It catalyses the reaction iodide(out) = iodide(in). With respect to regulation, activated by extracellular Ca(2+) and inhibited by extracellular acidic pH. In terms of biological role, anion-selective channel permeable to small monovalent anions with ion selectivity for chloride &gt; bromide &gt; nitrate &gt; iodide. Forms a homodimeric channel where each subunit has its own ion conduction pathway. Conducts double-barreled currents controlled by two types of gates, two fast gates that control each subunit independently and a slow common gate that opens and shuts off both subunits simultaneously. Assembles with the regulatory subunit BSND/Barttin for sorting at the basolateral plasma membrane domain. CLCNKA:BSND channels are activated upon membrane hyperpolarization mostly controlled by fast gating. Mediates transepithelial chloride transport from the lumen to interstitial compartment along the thin ascending limb of Henle's loop, contributing to generation of hypertonic medullary interstitium as a countercurrent system to achieve urine concentration. Conducts chloride currents in the stria vascularis of the inner ear to establish the endocochlear potential necessary for normal hearing. The polypeptide is Chloride channel protein ClC-Ka (Rattus norvegicus (Rat)).